The chain runs to 1099 residues: SLIT-ROBO Rho GTPase-activating protein 3 (1099 aa).

One can recognise an F-BAR domain in the interval 19–314 (AQIKEIRTQL…AVDNLDSRSD (296 aa)). The interval 205–225 (HEDRPQRRSSVKKIEKMKEKR) is disordered. Positions 352-392 (QTELLMRYHQLQSRLATLKIENEEVRKTLDATMQTLQDMLT) form a coiled coil. The segment at 471–493 (ERAECGTTRPPCLPPKPQKMRRP) is disordered. The Rho-GAP domain occupies 506–694 (GSMEAFIKDS…TIIIHHEAIF (189 aa)). In terms of domain architecture, SH3 spans 744-803 (VEQIEAIAKFDYMGRSPRELSFKKGASLLLYHRASEDWWEGRHNGVDGLIPHQYIVVQDM). A compositionally biased stretch (polar residues) spans 809–820 (DSLSQKADSEAS). The tract at residues 809–847 (DSLSQKADSEASSGPLLDDKASSKNDLQSPTEHISDYGF) is disordered. A phosphoserine mark is found at Ser817, Ser820, Ser821, Ser837, and Ser858. 2 disordered regions span residues 861 to 911 (AAIP…SPEK) and 926 to 950 (PDKK…SSLG). The segment covering 926-936 (PDKKALSEGHS) has biased composition (basic and acidic residues). Polar residues predominate over residues 937 to 947 (MRSTCGSTRHS). Positions 952 to 987 (HKSLEAEALAEDIEKTMSTALHELRELERQNTVKQA) form a coiled coil. Position 954 is a phosphoserine (Ser954). The interval 995–1099 (LEPLKNPPGP…NSSADKSGTM (105 aa)) is disordered. 2 stretches are compositionally biased toward low complexity: residues 1026 to 1038 (RRSS…MMTT) and 1060 to 1074 (VRPV…SSSS). Residues 1089-1099 (PNSSADKSGTM) are compositionally biased toward polar residues.

In terms of assembly, homodimer. Forms a heterooligomer with SRGAP1 and SRGAP2 through its F-BAR domain. Interacts with WASF1. Probably interacts with ROBO1. Interacts with FASLG. As to expression, highly expressed in adult and fetal brain. Expressed at low levels in kidney. Isoform 3 is expressed in the kidney but is absent in the brain.

GTPase-activating protein for RAC1 and perhaps Cdc42, but not for RhoA small GTPase. May attenuate RAC1 signaling in neurons. The protein is SLIT-ROBO Rho GTPase-activating protein 3 (SRGAP3) of Homo sapiens (Human).